A 257-amino-acid chain; its full sequence is Urease accessory protein UreD (257 aa).

It belongs to the UreD family. UreD, UreF and UreG form a complex that acts as a GTP-hydrolysis-dependent molecular chaperone, activating the urease apoprotein by helping to assemble the nickel containing metallocenter of UreC. The UreE protein probably delivers the nickel.

Its subcellular location is the cytoplasm. In terms of biological role, required for maturation of urease via the functional incorporation of the urease nickel metallocenter. In Ruegeria pomeroyi (strain ATCC 700808 / DSM 15171 / DSS-3) (Silicibacter pomeroyi), this protein is Urease accessory protein UreD.